Reading from the N-terminus, the 88-residue chain is UPF0250 protein Shal_3239 (88 aa).

The protein belongs to the UPF0250 family.

The sequence is that of UPF0250 protein Shal_3239 from Shewanella halifaxensis (strain HAW-EB4).